A 258-amino-acid polypeptide reads, in one-letter code: MPPQQGDPAFPDRCEAPPVPPRRERGGRGGRGPGEPGGRGRAGGAEGRGVKCVLVGDGAVGKTSLVVSYTTNGYPTEYIPTAFDNFSAVVSVDGRPVRLQLCDTAGQDEFDKLRPLCYTNTDIFLLCFSVVSPSSFQNVSEKWVPEIRCHCPKAPIILVGTQSDLREDVKVLIELDKCKEKPVPEEAAKLCAEEIKAASYIECSALTQKNLKEVFDAAIVAGIQYSDTQQQPKKSKSRTPDKMKNLSKSWWKKYCCFV.

The segment at 1-45 (MPPQQGDPAFPDRCEAPPVPPRRERGGRGGRGPGEPGGRGRAGGA) is disordered. Positions 10–27 (FPDRCEAPPVPPRRERGG) are enriched in basic and acidic residues. Over residues 29 to 45 (GGRGPGEPGGRGRAGGA) the composition is skewed to gly residues. Residues 56-63 (GDGAVGKT), 103-107 (DTAGQ), and 161-164 (TQSD) each bind GTP. Glycyl lysine isopeptide (Lys-Gly) (interchain with G-Cter in ubiquitin) cross-links involve residues lysine 177 and lysine 248. A lipid anchor (S-palmitoyl cysteine) is attached at cysteine 256.

This sequence belongs to the small GTPase superfamily. Rho family. Interacts with PAK1. Interacts with PAK3. Interacts with ARHGAP30 in a GTP-independent manner. In its GTP-loaded conformation, interacts with ARHGAP31. Interacts with PTK2B/PYK2. Interacts with PAK4; the interaction is PAK4 kinase activity-independent and protects RHOU from ubiquitination. Mg(2+) is required as a cofactor. Ubiquitinated. 'Lys-48'-linked ubiquitination at Lys-177 and Lys-248 by the ECS(RAB40A) complex leading to its degradation. Post-translationally, tyrosine phosphorylated by SRC in response to PTK2B/PYK2 activation. Ubiquitously expressed in all tissues examined. Expressed at high levels in the stomach, small intestine, brain, skeletal muscle and placenta.

Its subcellular location is the cell membrane. The protein localises to the golgi apparatus membrane. The protein resides in the cell junction. It localises to the focal adhesion. It is found in the cell projection. Its subcellular location is the podosome. Its function is as follows. Binds to and activates protein kinase PAK1. Plays a role in the regulation of cell morphology, cytoskeletal organization and focal adhesion assembly during cell migration. Also stimulates quiescent cells to reenter the cell cycle. Has no detectable GTPase activity but its high intrinsic guanine nucleotide exchange activity suggests it is constitutively GTP-bound. In Homo sapiens (Human), this protein is Rho-related GTP-binding protein RhoU.